The sequence spans 247 residues: 6-carboxyhexanoate--CoA ligase (247 aa).

This sequence belongs to the BioW family. In terms of assembly, homodimer. Mg(2+) serves as cofactor.

The catalysed reaction is heptanedioate + ATP + CoA = 6-carboxyhexanoyl-CoA + AMP + diphosphate. It participates in metabolic intermediate metabolism; pimeloyl-CoA biosynthesis; pimeloyl-CoA from pimelate: step 1/1. Its function is as follows. Catalyzes the transformation of pimelate into pimeloyl-CoA with concomitant hydrolysis of ATP to AMP. This Corynebacterium diphtheriae (strain ATCC 700971 / NCTC 13129 / Biotype gravis) protein is 6-carboxyhexanoate--CoA ligase.